The chain runs to 212 residues: Thymidylate kinase (212 aa).

An ATP-binding site is contributed by 10 to 17; sequence GPEGAGKT.

Belongs to the thymidylate kinase family.

It catalyses the reaction dTMP + ATP = dTDP + ADP. Phosphorylation of dTMP to form dTDP in both de novo and salvage pathways of dTTP synthesis. In Bacillus pumilus (strain SAFR-032), this protein is Thymidylate kinase.